Consider the following 90-residue polypeptide: Translation initiation factor IF-1 2 (90 aa).

The region spanning 1 to 72 is the S1-like domain; that stretch reads MAKEELLELD…TKGRINFRHK (72 aa).

It belongs to the IF-1 family. Component of the 30S ribosomal translation pre-initiation complex which assembles on the 30S ribosome in the order IF-2 and IF-3, IF-1 and N-formylmethionyl-tRNA(fMet); mRNA recruitment can occur at any time during PIC assembly.

It is found in the cytoplasm. Its function is as follows. One of the essential components for the initiation of protein synthesis. Stabilizes the binding of IF-2 and IF-3 on the 30S subunit to which N-formylmethionyl-tRNA(fMet) subsequently binds. Helps modulate mRNA selection, yielding the 30S pre-initiation complex (PIC). Upon addition of the 50S ribosomal subunit IF-1, IF-2 and IF-3 are released leaving the mature 70S translation initiation complex. The sequence is that of Translation initiation factor IF-1 2 from Paraburkholderia xenovorans (strain LB400).